Consider the following 505-residue polypeptide: Cytochrome P450 2K6 (505 aa).

A helical transmembrane segment spans residues 7–27 (FLLQGSPTGTILGALLLFLVI). Heme is bound at residue cysteine 448.

The protein belongs to the cytochrome P450 family. It depends on heme as a cofactor. In terms of tissue distribution, detected in liver and ovary.

It localises to the endoplasmic reticulum membrane. The protein localises to the microsome membrane. Metabolizes aflatoxin B1 (AFB1) to the cytotoxic derivative AFB1 exo-8,9-epoxide. Does not show activity towards lauric acid. The sequence is that of Cytochrome P450 2K6 from Danio rerio (Zebrafish).